The sequence spans 169 residues: Required for excision 1-B domain-containing protein (169 aa).

The sequence is that of Required for excision 1-B domain-containing protein from Mus musculus (Mouse).